Consider the following 111-residue polypeptide: Cell division protein FtsL (111 aa).

Residues 1 to 26 lie on the Cytoplasmic side of the membrane; the sequence is MAQARTEFSKVAAPRKLEEMYAQRGD. Residues 27-47 traverse the membrane as a helical segment; sequence LFPYLLAVLVLLTLVSVFHVW. Residues 48 to 111 lie on the Periplasmic side of the membrane; the sequence is SRVRVVDLNL…PTDQQVVVVK (64 aa). The stretch at 51 to 85 forms a coiled coil; it reads RVVDLNLEVAEVARQLKVAQEEQNRLKLEVASLKT.

Belongs to the FtsL family.

The protein resides in the cell inner membrane. In terms of biological role, essential cell division protein. The protein is Cell division protein FtsL of Geobacter sulfurreducens (strain ATCC 51573 / DSM 12127 / PCA).